Here is a 99-residue protein sequence, read N- to C-terminus: Small ribosomal subunit protein uS14 (99 aa).

The protein belongs to the universal ribosomal protein uS14 family. Part of the 30S ribosomal subunit. Contacts proteins S3 and S10.

In terms of biological role, binds 16S rRNA, required for the assembly of 30S particles and may also be responsible for determining the conformation of the 16S rRNA at the A site. In Bacteroides fragilis (strain ATCC 25285 / DSM 2151 / CCUG 4856 / JCM 11019 / LMG 10263 / NCTC 9343 / Onslow / VPI 2553 / EN-2), this protein is Small ribosomal subunit protein uS14.